We begin with the raw amino-acid sequence, 465 residues long: Coumaroyl-CoA:anthocyanidin 3-O-glucoside-6''-O-coumaroyltransferase 2 (465 aa).

Residue M1 is modified to N-acetylmethionine. Catalysis depends on proton acceptor residues H173 and D406.

It belongs to the plant acyltransferase family. As to expression, highly expressed in flowers, and leaves. Lower levels of expression in stems, roots and siliques.

Functionally, involved in the acylation of the 6'' position of the 3-O-glucose residue of anthocyanin. Also able to use flavonol 3-glucosides as the acyl acceptor. The chain is Coumaroyl-CoA:anthocyanidin 3-O-glucoside-6''-O-coumaroyltransferase 2 (3AT2) from Arabidopsis thaliana (Mouse-ear cress).